Here is a 218-residue protein sequence, read N- to C-terminus: Small ribosomal subunit protein uS3 (218 aa).

The region spanning Ile-38–Lys-106 is the KH type-2 domain.

It belongs to the universal ribosomal protein uS3 family. Part of the 30S ribosomal subunit. Forms a tight complex with proteins S10 and S14.

Its function is as follows. Binds the lower part of the 30S subunit head. Binds mRNA in the 70S ribosome, positioning it for translation. This is Small ribosomal subunit protein uS3 from Geobacillus stearothermophilus (Bacillus stearothermophilus).